The primary structure comprises 245 residues: Retrovirus-related Pol polyprotein from type-1 retrotransposable element R1 (245 aa).

The region spanning Leu1 to Ala105 is the Reverse transcriptase domain. Residues Glu106–Gln245 form a nucleic acid-binding endonuclease region.

It carries out the reaction DNA(n) + a 2'-deoxyribonucleoside 5'-triphosphate = DNA(n+1) + diphosphate. This chain is Retrovirus-related Pol polyprotein from type-1 retrotransposable element R1, found in Popillia japonica (Japanese beetle).